The following is a 297-amino-acid chain: MPQAADIATAPQRPSAPGDVVAAGQPPRARGRAHVSSKRRDDGAVALDTLHQSGALKLLFPTGRPDLEAVTVNTAGGITGGDDFALTAKAGAQSQLTLTTQAAERVYRAQPHQTGQMTTRLSVEPQARLRWVPQETILFQHSAFRRSLHVELADDAELLLVEPLVFGRVAMGEHLSALRFHDQIQIRRAGRILFRDAIRLDGDAMAQLKRPGIAGVLSGPCTAMVTLVLASPGAEAALAWLRTQLPAGKEAYGGASLLAPNLLHMRLLARDSFVLRQSLLPILDKLTEGSLPRCWRL.

The tract at residues Met-1–Asp-41 is disordered.

This sequence belongs to the UreD family. UreD, UreF and UreG form a complex that acts as a GTP-hydrolysis-dependent molecular chaperone, activating the urease apoprotein by helping to assemble the nickel containing metallocenter of UreC. The UreE protein probably delivers the nickel.

It localises to the cytoplasm. In terms of biological role, required for maturation of urease via the functional incorporation of the urease nickel metallocenter. This is Urease accessory protein UreD from Ruegeria sp. (strain TM1040) (Silicibacter sp.).